Consider the following 508-residue polypeptide: Hydroxymethylglutaryl-CoA synthase, mitochondrial (508 aa).

The transit peptide at 1-37 directs the protein to the mitochondrion; the sequence is MQRLLAPARRVLQVKRAMQETSLTPAHLLSAAQQRFS. At Lys52 the chain carries N6-succinyllysine. (3S)-3-hydroxy-3-methylglutaryl-CoA contacts are provided by Glu80 and Ala81. 2 positions are modified to N6-acetyllysine; alternate: Lys83 and Lys118. An N6-succinyllysine; alternate mark is found at Lys83 and Lys118. Glu132 acts as the Proton donor/acceptor in catalysis. Residues Cys166, Asn204, and Thr208 each contribute to the (3S)-3-hydroxy-3-methylglutaryl-CoA site. The active-site Acyl-thioester intermediate is the Cys166. N6-succinyllysine is present on Lys221. N6-acetyllysine is present on Lys243. Lys256 carries the post-translational modification N6-acetyllysine; alternate. Residue Lys256 is modified to N6-succinyllysine; alternate. (3S)-3-hydroxy-3-methylglutaryl-CoA is bound by residues Ser258 and His301. Residue His301 is the Proton donor/acceptor of the active site. Lys306 is modified (N6-acetyllysine). Lys310 provides a ligand contact to (3S)-3-hydroxy-3-methylglutaryl-CoA. N6-acetyllysine; alternate occurs at positions 310 and 327. Lys310 and Lys327 each carry N6-succinyllysine; alternate. An N6-succinyllysine modification is found at Lys333. N6-acetyllysine; alternate occurs at positions 342, 350, 354, and 358. Residues Lys342, Lys350, Lys354, and Lys358 each carry the N6-succinyllysine; alternate modification. Residues Asn380 and Ser414 each coordinate (3S)-3-hydroxy-3-methylglutaryl-CoA. The residue at position 427 (Lys427) is an N6-acetyllysine. Phosphoserine is present on Ser433. The residue at position 437 (Lys437) is an N6-acetyllysine. A Phosphoserine modification is found at Ser440. Position 447 is an N6-acetyllysine; alternate (Lys447). Lys447 is subject to N6-succinyllysine; alternate. Ser456 is modified (phosphoserine). Position 473 is an N6-acetyllysine; alternate (Lys473). Position 473 is an N6-succinyllysine; alternate (Lys473). Residue Ser477 is modified to Phosphoserine.

The protein belongs to the thiolase-like superfamily. HMG-CoA synthase family. Homodimer. Acetylation of Lys-427 is observed in liver mitochondria from fasted mice but not from fed mice. In terms of processing, succinylated. Desuccinylated by SIRT5. Succinylation, at least at Lys-83 and Lys-310, inhibits the enzymatic activity. In terms of tissue distribution, liver and kidney.

It localises to the mitochondrion. The enzyme catalyses acetoacetyl-CoA + acetyl-CoA + H2O = (3S)-3-hydroxy-3-methylglutaryl-CoA + CoA + H(+). It participates in metabolic intermediate biosynthesis; (R)-mevalonate biosynthesis; (R)-mevalonate from acetyl-CoA: step 2/3. Functionally, catalyzes the first irreversible step in ketogenesis, condensing acetyl-CoA to acetoacetyl-CoA to form HMG-CoA, which is converted by HMG-CoA reductase (HMGCR) into mevalonate. The sequence is that of Hydroxymethylglutaryl-CoA synthase, mitochondrial (Hmgcs2) from Mus musculus (Mouse).